The primary structure comprises 334 residues: MTPLDAKRPLQLNAQGQLQHFLSLDGLPRELLTEILDTADSFLEVGGRAVKKVPLLRGKTICNVFFENSTRTRTTFELAAQRLSADVITLNVSTSSASKGETLLDTLRNLEAMAADMFVVRHGDSGAAHFIAEHVCPQVAIINGGDGRHAHPTQGMLDMLTIRRHKGSFENLSVAIVGDILHSRVARSNMLALKTLGCPDIRVIAPKTLLPIGIEQYGVKVYTDMAEGLKDVDVVIMLRLQRERMSGGLLPSEGEFYRLFGLTTARLAGAKPDAIVMHPGPINRGVEIESAVADGNQSVILNQVTYGIAVRMAVLSMAMSGQTAQRQFEQENAQ.

Residues Arg71 and Thr72 each contribute to the carbamoyl phosphate site. Lys99 contributes to the L-aspartate binding site. Residues Arg121, His151, and Gln154 each contribute to the carbamoyl phosphate site. L-aspartate contacts are provided by Arg184 and Arg239. The carbamoyl phosphate site is built by Gly280 and Pro281.

This sequence belongs to the aspartate/ornithine carbamoyltransferase superfamily. ATCase family. As to quaternary structure, heterododecamer (2C3:3R2) of six catalytic PyrB chains organized as two trimers (C3), and six regulatory PyrI chains organized as three dimers (R2).

It carries out the reaction carbamoyl phosphate + L-aspartate = N-carbamoyl-L-aspartate + phosphate + H(+). The protein operates within pyrimidine metabolism; UMP biosynthesis via de novo pathway; (S)-dihydroorotate from bicarbonate: step 2/3. Its function is as follows. Catalyzes the condensation of carbamoyl phosphate and aspartate to form carbamoyl aspartate and inorganic phosphate, the committed step in the de novo pyrimidine nucleotide biosynthesis pathway. The chain is Aspartate carbamoyltransferase catalytic subunit from Pseudomonas fluorescens (strain SBW25).